The chain runs to 394 residues: 2-oxoglutarate and iron-dependent oxygenase domain-containing protein CP2 (394 aa).

A disordered region spans residues 1–35 (MSSEQREGSQETTTTTVEGNGTIAGQNSHSAAPTT). The span at 17 to 35 (VEGNGTIAGQNSHSAAPTT) shows a compositional bias: polar residues. Positions 248–347 (DSHHGFVVEY…RVNMLLWCRS (100 aa)) constitute a Fe2OG dioxygenase domain. 3 residues coordinate Fe cation: histidine 268, aspartate 270, and histidine 328. Arginine 338 is a 2-oxoglutarate binding site.

The cofactor is Fe(2+). L-ascorbate is required as a cofactor. As to expression, expressed in roots, cotyledons, rosette leaves, cauline leaves, inflorescences and siliques.

It localises to the nucleus. The protein resides in the nucleoplasm. Its function is as follows. Participates in the epigenetic repression of flowering genes in association with ICU11. Functions in the repression of several members of the MADS-box transcription factors family, including SEP3, during vegetative development via histone modification. The protein is 2-oxoglutarate and iron-dependent oxygenase domain-containing protein CP2 of Arabidopsis thaliana (Mouse-ear cress).